A 345-amino-acid chain; its full sequence is Uroporphyrinogen decarboxylase (345 aa).

Substrate-binding positions include Arg27–Arg31, Phe46, Asp76, Tyr152, Ser207, and His321.

The protein belongs to the uroporphyrinogen decarboxylase family. Homodimer.

Its subcellular location is the cytoplasm. It carries out the reaction uroporphyrinogen III + 4 H(+) = coproporphyrinogen III + 4 CO2. It participates in porphyrin-containing compound metabolism; protoporphyrin-IX biosynthesis; coproporphyrinogen-III from 5-aminolevulinate: step 4/4. In terms of biological role, catalyzes the decarboxylation of four acetate groups of uroporphyrinogen-III to yield coproporphyrinogen-III. The polypeptide is Uroporphyrinogen decarboxylase (Staphylococcus aureus (strain USA300 / TCH1516)).